The sequence spans 175 residues: Albumin-1 (175 aa).

The cysteines at positions 135 and 141 are disulfide-linked.

The protein belongs to the protease inhibitor I3 (leguminous Kunitz-type inhibitor) family.

2S seed storage protein. In Psophocarpus tetragonolobus (Winged bean), this protein is Albumin-1.